The primary structure comprises 346 residues: uncharacterized protein (346 aa).

The protein belongs to the PhyH family.

It is found in the cytoplasm. This is an uncharacterized protein from Saccharomyces cerevisiae (strain ATCC 204508 / S288c) (Baker's yeast).